The sequence spans 213 residues: Orotate phosphoribosyltransferase (213 aa).

Lysine 26 contacts 5-phospho-alpha-D-ribose 1-diphosphate. Orotate is bound at residue 34 to 35 (FF). 5-phospho-alpha-D-ribose 1-diphosphate is bound by residues 72 to 73 (YK), arginine 99, lysine 100, lysine 103, histidine 105, and 124 to 132 (DDVITAGTA). Orotate is bound by residues threonine 128 and arginine 156.

It belongs to the purine/pyrimidine phosphoribosyltransferase family. PyrE subfamily. Homodimer. It depends on Mg(2+) as a cofactor.

It carries out the reaction orotidine 5'-phosphate + diphosphate = orotate + 5-phospho-alpha-D-ribose 1-diphosphate. Its pathway is pyrimidine metabolism; UMP biosynthesis via de novo pathway; UMP from orotate: step 1/2. Catalyzes the transfer of a ribosyl phosphate group from 5-phosphoribose 1-diphosphate to orotate, leading to the formation of orotidine monophosphate (OMP). The sequence is that of Orotate phosphoribosyltransferase from Shigella flexneri.